A 343-amino-acid polypeptide reads, in one-letter code: D-alanine--D-alanine ligase (343 aa).

One can recognise an ATP-grasp domain in the interval 129-335; that stretch reads KYVLENFGVK…YGELISEIIE (207 aa). 162-217 lines the ATP pocket; sequence ENKLGYDVFIKPSNSGSSVGISKAHNREELEAGLEEALKFDRKVLVEVALNAREIE. Positions 288, 302, and 304 each coordinate Mg(2+).

This sequence belongs to the D-alanine--D-alanine ligase family. Mg(2+) serves as cofactor. Mn(2+) is required as a cofactor.

Its subcellular location is the cytoplasm. The enzyme catalyses 2 D-alanine + ATP = D-alanyl-D-alanine + ADP + phosphate + H(+). The protein operates within cell wall biogenesis; peptidoglycan biosynthesis. Cell wall formation. The sequence is that of D-alanine--D-alanine ligase from Clostridium novyi (strain NT).